We begin with the raw amino-acid sequence, 354 residues long: Serum paraoxonase/lactonase 3 (354 aa).

Residues cysteine 42 and cysteine 352 are joined by a disulfide bond. The N-linked (GlcNAc...) asparagine glycan is linked to asparagine 50. Ca(2+) is bound by residues glutamate 53 and aspartate 54. Histidine 114 serves as the catalytic Proton acceptor. Isoleucine 116 contributes to the Ca(2+) binding site. Serine 165 bears the Phosphoserine mark. The Ca(2+) site is built by asparagine 167, asparagine 168, asparagine 223, aspartate 268, and asparagine 269. Asparagine 269 is a glycosylation site (N-linked (GlcNAc...) asparagine).

The protein belongs to the paraoxonase family. As to quaternary structure, homodimer. Requires Ca(2+) as cofactor. In terms of processing, glycosylated. The signal sequence is not cleaved.

The protein resides in the secreted. The protein localises to the extracellular space. The enzyme catalyses a phenyl acetate + H2O = a phenol + acetate + H(+). It carries out the reaction An aryl dialkyl phosphate + H2O = dialkyl phosphate + an aryl alcohol.. The catalysed reaction is an N-acyl-L-homoserine lactone + H2O = an N-acyl-L-homoserine + H(+). Has low activity towards the organophosphate paraxon and aromatic carboxylic acid esters. Rapidly hydrolyzes lactones such as statin prodrugs (e.g. lovastatin). Hydrolyzes aromatic lactones and 5- or 6-member ring lactones with aliphatic substituents but not simple lactones or those with polar substituents. The sequence is that of Serum paraoxonase/lactonase 3 (PON3) from Oryctolagus cuniculus (Rabbit).